A 513-amino-acid polypeptide reads, in one-letter code: Fumarate reductase (513 aa).

41–55 contributes to the FAD binding site; sequence AIVIGGGLAGLSATN. A Phosphoserine modification is found at Ser-100. Active-site residues include His-288 and Arg-311.

This sequence belongs to the FAD-dependent oxidoreductase 2 family. FRD/SDH subfamily. It depends on FAD as a cofactor.

It is found in the cytoplasm. It localises to the mitochondrion. The protein resides in the nucleus. The catalysed reaction is succinate + NAD(+) = fumarate + NADH + H(+). In terms of biological role, irreversibly catalyzes the reduction of fumarate to succinate. The polypeptide is Fumarate reductase (osm1) (Schizosaccharomyces pombe (strain 972 / ATCC 24843) (Fission yeast)).